Consider the following 81-residue polypeptide: MAHSVKVYDTCIGCTQCVRACPCDVLEMVPRDGCKAGQIASAPRTEDCIGCKRCETACPTDFLSVRVYLGGETTRSMGLTY.

4Fe-4S ferredoxin-type domains follow at residues 2–31 (AHSV…MVPR) and 39–68 (IASA…VRVY). Residues Cys11, Cys14, Cys17, Cys21, Cys48, Cys51, Cys54, and Cys58 each contribute to the [4Fe-4S] cluster site.

The eukaryotic PSI reaction center is composed of at least 11 subunits. It depends on [4Fe-4S] cluster as a cofactor.

The protein localises to the plastid. The protein resides in the chloroplast thylakoid membrane. It catalyses the reaction reduced [plastocyanin] + hnu + oxidized [2Fe-2S]-[ferredoxin] = oxidized [plastocyanin] + reduced [2Fe-2S]-[ferredoxin]. Functionally, apoprotein for the two 4Fe-4S centers FA and FB of photosystem I (PSI); essential for photochemical activity. FB is the terminal electron acceptor of PSI, donating electrons to ferredoxin. The C-terminus interacts with PsaA/B/D and helps assemble the protein into the PSI complex. Required for binding of PsaD and PsaE to PSI. PSI is a plastocyanin/cytochrome c6-ferredoxin oxidoreductase, converting photonic excitation into a charge separation, which transfers an electron from the donor P700 chlorophyll pair to the spectroscopically characterized acceptors A0, A1, FX, FA and FB in turn. This chain is Photosystem I iron-sulfur center, found in Antithamnion sp. (Red alga).